We begin with the raw amino-acid sequence, 487 residues long: Cobyric acid synthase (487 aa).

Residues 249–435 (GIDIAIVRLP…IHGIFDEGDF (187 aa)) enclose the GATase cobBQ-type domain. The Nucleophile role is filled by Cys330. Residue His427 is part of the active site.

It belongs to the CobB/CobQ family. CobQ subfamily.

It functions in the pathway cofactor biosynthesis; adenosylcobalamin biosynthesis. Its function is as follows. Catalyzes amidations at positions B, D, E, and G on adenosylcobyrinic A,C-diamide. NH(2) groups are provided by glutamine, and one molecule of ATP is hydrogenolyzed for each amidation. In Clostridium perfringens (strain ATCC 13124 / DSM 756 / JCM 1290 / NCIMB 6125 / NCTC 8237 / Type A), this protein is Cobyric acid synthase.